Consider the following 158-residue polypeptide: L-alanine exporter AlaE (158 aa).

Helical transmembrane passes span 23-43 (FAMV…VSGM), 53-73 (LVAI…RDAV), 92-112 (VIAY…FVGA), and 117-137 (IITA…AYGY).

The protein belongs to the AlaE exporter family.

The protein resides in the cell inner membrane. In terms of biological role, exports L-alanine. The chain is L-alanine exporter AlaE from Cronobacter sakazakii (strain ATCC BAA-894) (Enterobacter sakazakii).